We begin with the raw amino-acid sequence, 246 residues long: Bromelain inhibitor (246 aa).

The signal sequence occupies residues 1–19 (MNMLLLFLHEVINGERVTL). Disulfide bonds link cysteine 22/cysteine 42, cysteine 25/cysteine 74, cysteine 27/cysteine 40, cysteine 49/cysteine 56, and cysteine 53/cysteine 65. The propeptide occupies 31–35 (TSSSD). 2 consecutive propeptides follow at residues 77 to 95 (PVSS…RVTL) and 107 to 111 (TSSSD). 5 disulfide bridges follow: cysteine 98–cysteine 118, cysteine 101–cysteine 150, cysteine 103–cysteine 116, cysteine 125–cysteine 132, and cysteine 129–cysteine 141. 2 consecutive propeptides follow at residues 153-171 (PVSS…RVTL) and 183-187 (TSSSD). Intrachain disulfides connect cysteine 174–cysteine 194, cysteine 177–cysteine 226, cysteine 179–cysteine 192, cysteine 201–cysteine 208, and cysteine 205–cysteine 217. The propeptide occupies 229 to 246 (PVSSWEARQKIKLLQGRE).

The protein belongs to the protease inhibitor I67 family. As to quaternary structure, each inhibitor is composed of two chains, designated A and B linked by three disulfide bonds.

Functionally, weak inhibitor of cysteine proteinases. This Ananas comosus (Pineapple) protein is Bromelain inhibitor.